Consider the following 1009-residue polypeptide: Kinesin-like protein KIN-5C (1009 aa).

The 348-residue stretch at 12–359 (NVQVLLRCRP…LDYAHRAKNI (348 aa)) folds into the Kinesin motor domain. An ATP-binding site is contributed by 98–105 (GQTGTGKT). Positions 406–526 (YQEESERKVM…NSSLHQKIGR (121 aa)) form a coiled coil. Disordered stretches follow at residues 862–882 (SNEQ…KDVT) and 987–1009 (YESF…SQVN). Basic and acidic residues-rich tracts occupy residues 863-882 (NEQH…KDVT) and 987-996 (YESFATKETK). Polar residues predominate over residues 997–1009 (PQQLTRSPLSQVN).

The protein belongs to the TRAFAC class myosin-kinesin ATPase superfamily. Kinesin family. KIN-5/BimC subfamily.

The protein resides in the cytoplasm. It is found in the cytoskeleton. Its subcellular location is the spindle. Responsible for microtubule translocation. May be important for the organization of phragmoplast-specific arrays of microtubules. Plays an essential role in stabilizing the mitotic spindle. Required during mitotic cytokinesis. This chain is Kinesin-like protein KIN-5C, found in Arabidopsis thaliana (Mouse-ear cress).